A 142-amino-acid polypeptide reads, in one-letter code: NTF2-related export protein 2 (142 aa).

The NTF2 domain maps to A17–F136.

In terms of assembly, associates with NXF1, NXF2, NXF3 and NXF5.

Its subcellular location is the nucleus. The protein resides in the cytoplasm. Regulator of protein export for NES-containing proteins. Also plays a role in mRNA nuclear export. In Homo sapiens (Human), this protein is NTF2-related export protein 2.